We begin with the raw amino-acid sequence, 164 residues long: Peptide deformylase (164 aa).

Fe cation-binding residues include Cys87 and His129. Residue Glu130 is part of the active site. His133 contacts Fe cation.

The protein belongs to the polypeptide deformylase family. Fe(2+) is required as a cofactor.

It carries out the reaction N-terminal N-formyl-L-methionyl-[peptide] + H2O = N-terminal L-methionyl-[peptide] + formate. Removes the formyl group from the N-terminal Met of newly synthesized proteins. Requires at least a dipeptide for an efficient rate of reaction. N-terminal L-methionine is a prerequisite for activity but the enzyme has broad specificity at other positions. This Thermotoga maritima (strain ATCC 43589 / DSM 3109 / JCM 10099 / NBRC 100826 / MSB8) protein is Peptide deformylase.